The following is a 118-amino-acid chain: V-type proton ATPase subunit G 3 (118 aa).

Residues 1–12 show a composition bias toward polar residues; sequence MASQSQGIQQLL. Residues 1–37 form a disordered region; the sequence is MASQSQGIQQLLQAEKRAKDKLEEAKKRKNKRLRQAK. Residues 3 to 53 adopt a coiled-coil conformation; it reads SQSQGIQQLLQAEKRAKDKLEEAKKRKNKRLRQAKEEATADIDQYRLKREG. A compositionally biased stretch (basic and acidic residues) spans 14–26; it reads AEKRAKDKLEEAK.

Belongs to the V-ATPase G subunit family. As to quaternary structure, V-ATPase is a heteromultimeric enzyme made up of two complexes: the ATP-hydrolytic V1 complex and the proton translocation V0 complex. The V1 complex consists of three catalytic AB heterodimers that form a heterohexamer, three peripheral stalks each consisting of EG heterodimers, one central rotor including subunits D and F, and the regulatory subunits C and H. The proton translocation complex V0 consists of the proton transport subunit a, a ring of proteolipid subunits c9c'', rotary subunit d, subunits e and f, and two accessory subunits.

In terms of biological role, subunit of the V1 complex of vacuolar(H+)-ATPase (V-ATPase), a multisubunit enzyme composed of a peripheral complex (V1) that hydrolyzes ATP and a membrane integral complex (V0) that translocates protons. V-ATPase is responsible for acidifying and maintaining the pH of intracellular compartments and in some cell types, is targeted to the plasma membrane, where it is responsible for acidifying the extracellular environment. In Xenopus tropicalis (Western clawed frog), this protein is V-type proton ATPase subunit G 3 (atp6v1g3).